The following is a 445-amino-acid chain: tRNA-2-methylthio-N(6)-dimethylallyladenosine synthase (445 aa).

One can recognise an MTTase N-terminal domain in the interval 2–122 (KKAFVKSYGC…LPDLLARSRE (121 aa)). 6 residues coordinate [4Fe-4S] cluster: cysteine 11, cysteine 47, cysteine 85, cysteine 157, cysteine 161, and cysteine 164. The region spanning 143–378 (RTLGASAFLT…LDSQRHAYQR (236 aa)) is the Radical SAM core domain. In terms of domain architecture, TRAM spans 378 to 440 (RAAAGRVFDV…SNSLFGELVS (63 aa)).

This sequence belongs to the methylthiotransferase family. MiaB subfamily. Monomer. Requires [4Fe-4S] cluster as cofactor.

It localises to the cytoplasm. The enzyme catalyses N(6)-dimethylallyladenosine(37) in tRNA + (sulfur carrier)-SH + AH2 + 2 S-adenosyl-L-methionine = 2-methylsulfanyl-N(6)-dimethylallyladenosine(37) in tRNA + (sulfur carrier)-H + 5'-deoxyadenosine + L-methionine + A + S-adenosyl-L-homocysteine + 2 H(+). Functionally, catalyzes the methylthiolation of N6-(dimethylallyl)adenosine (i(6)A), leading to the formation of 2-methylthio-N6-(dimethylallyl)adenosine (ms(2)i(6)A) at position 37 in tRNAs that read codons beginning with uridine. The chain is tRNA-2-methylthio-N(6)-dimethylallyladenosine synthase from Methylobacterium radiotolerans (strain ATCC 27329 / DSM 1819 / JCM 2831 / NBRC 15690 / NCIMB 10815 / 0-1).